The primary structure comprises 740 residues: Catalase-peroxidase (740 aa).

Basic and acidic residues predominate over residues 1–16 (MSENHDAIVTDAKTEE). Residues 1-38 (MSENHDAIVTDAKTEETDGCPVAHGRAPHPTQGGGNRQ) are disordered. Positions 108 to 231 (WHSAGTYRIS…LGAVQMGLIY (124 aa)) form a cross-link, tryptophyl-tyrosyl-methioninium (Trp-Tyr) (with M-257). H109 serves as the catalytic Proton acceptor. Residues 231–257 (YVNPEGPNGNPDPIAAARDIRETFRRM) constitute a cross-link (tryptophyl-tyrosyl-methioninium (Tyr-Met) (with W-108)). H272 is a binding site for heme b.

Belongs to the peroxidase family. Peroxidase/catalase subfamily. As to quaternary structure, homodimer. It depends on heme b as a cofactor. Post-translationally, formation of the three residue Trp-Tyr-Met cross-link is important for the catalase, but not the peroxidase activity of the enzyme.

It catalyses the reaction H2O2 + AH2 = A + 2 H2O. The enzyme catalyses 2 H2O2 = O2 + 2 H2O. Its function is as follows. Bifunctional enzyme with both catalase and broad-spectrum peroxidase activity. The polypeptide is Catalase-peroxidase (Streptomyces coelicolor (strain ATCC BAA-471 / A3(2) / M145)).